The chain runs to 329 residues: Ribonucleoside-diphosphate reductase subunit beta (329 aa).

Fe cation is bound by residues Asp66, Glu97, and His101. Tyr105 is an active-site residue. Fe cation contacts are provided by Glu164, Glu198, and His201.

Belongs to the ribonucleoside diphosphate reductase small chain family. As to quaternary structure, tetramer of two alpha and two beta subunits. Fe cation serves as cofactor.

The enzyme catalyses a 2'-deoxyribonucleoside 5'-diphosphate + [thioredoxin]-disulfide + H2O = a ribonucleoside 5'-diphosphate + [thioredoxin]-dithiol. Provides the precursors necessary for DNA synthesis. Catalyzes the biosynthesis of deoxyribonucleotides from the corresponding ribonucleotides. In Bacillus subtilis (strain 168), this protein is Ribonucleoside-diphosphate reductase subunit beta (nrdF).